We begin with the raw amino-acid sequence, 461 residues long: Bifunctional protein HldE (461 aa).

The segment at 1 to 315 is ribokinase; it reads MKKILVIGDL…LILNQTHPKI (315 aa). 191 to 194 contacts ATP; it reads NRTE. Asp-260 is a catalytic residue. The cytidylyltransferase stretch occupies residues 332 to 461; sequence FTNGCFDLLH…IEKIKRTCND (130 aa).

The protein in the N-terminal section; belongs to the carbohydrate kinase PfkB family. This sequence in the C-terminal section; belongs to the cytidylyltransferase family. Homodimer.

It carries out the reaction D-glycero-beta-D-manno-heptose 7-phosphate + ATP = D-glycero-beta-D-manno-heptose 1,7-bisphosphate + ADP + H(+). It catalyses the reaction D-glycero-beta-D-manno-heptose 1-phosphate + ATP + H(+) = ADP-D-glycero-beta-D-manno-heptose + diphosphate. Its pathway is nucleotide-sugar biosynthesis; ADP-L-glycero-beta-D-manno-heptose biosynthesis; ADP-L-glycero-beta-D-manno-heptose from D-glycero-beta-D-manno-heptose 7-phosphate: step 1/4. It participates in nucleotide-sugar biosynthesis; ADP-L-glycero-beta-D-manno-heptose biosynthesis; ADP-L-glycero-beta-D-manno-heptose from D-glycero-beta-D-manno-heptose 7-phosphate: step 3/4. It functions in the pathway bacterial outer membrane biogenesis; LPS core biosynthesis. In terms of biological role, catalyzes the phosphorylation of D-glycero-D-manno-heptose 7-phosphate at the C-1 position to selectively form D-glycero-beta-D-manno-heptose-1,7-bisphosphate. Catalyzes the ADP transfer from ATP to D-glycero-beta-D-manno-heptose 1-phosphate, yielding ADP-D-glycero-beta-D-manno-heptose. This Helicobacter pylori (strain ATCC 700392 / 26695) (Campylobacter pylori) protein is Bifunctional protein HldE.